We begin with the raw amino-acid sequence, 76 residues long: Esculentin-2SN1 (76 aa).

Positions 1–22 (MFTMKKSLLFLFFLGTISLSLC) are cleaved as a signal peptide. The propeptide occupies 23-37 (EQERGADEDDGGEEV). A disulfide bridge links C70 with C76.

Belongs to the frog skin active peptide (FSAP) family. Esculentin subfamily. In terms of tissue distribution, expressed by the skin glands.

The protein resides in the secreted. In terms of biological role, antimicrobial peptide. Active against some Gram-negative and a variety of Gram-positive bacterial strains. Not active against fungi. Shows very weak hemolytic activity against human erythrocytes. The polypeptide is Esculentin-2SN1 (Sylvirana spinulosa (Fine-spined frog)).